Reading from the N-terminus, the 187-residue chain is Elongation factor P (187 aa).

The protein belongs to the elongation factor P family.

It localises to the cytoplasm. It functions in the pathway protein biosynthesis; polypeptide chain elongation. Its function is as follows. Involved in peptide bond synthesis. Stimulates efficient translation and peptide-bond synthesis on native or reconstituted 70S ribosomes in vitro. Probably functions indirectly by altering the affinity of the ribosome for aminoacyl-tRNA, thus increasing their reactivity as acceptors for peptidyl transferase. The polypeptide is Elongation factor P (Nocardia farcinica (strain IFM 10152)).